Consider the following 223-residue polypeptide: Type II restriction enzyme BglII (223 aa).

Aspartate 84 and valine 94 together coordinate Mg(2+).

Homodimer. Requires Mg(2+) as cofactor.

The catalysed reaction is Endonucleolytic cleavage of DNA to give specific double-stranded fragments with terminal 5'-phosphates.. Functionally, a P subtype restriction enzyme that recognizes the double-stranded sequence 5'-AGATCT-3' and cleaves after A-1. This chain is Type II restriction enzyme BglII (bglIIR), found in Bacillus subtilis.